The sequence spans 59 residues: Large ribosomal subunit protein bL32 (59 aa).

The tract at residues 1–40 is disordered; sequence MAVQQNKKSPSKRGMHRSHDFLRTTPLSVDPGTGEVHLRH.

This sequence belongs to the bacterial ribosomal protein bL32 family.

In Nitrosospira multiformis (strain ATCC 25196 / NCIMB 11849 / C 71), this protein is Large ribosomal subunit protein bL32.